A 43-amino-acid polypeptide reads, in one-letter code: Seed non-specific lipid transfer protein-like (43 aa).

The protein belongs to the plant LTP family. Homodimer.

In terms of biological role, plant non-specific lipid-transfer proteins transfer phospholipids as well as galactolipids across membranes. May play a role in wax or cutin deposition in the cell walls of expanding epidermal cells and certain secretory tissues. This isoform inhibits the hyphal growth of several fungi in vitro. This is Seed non-specific lipid transfer protein-like from Raphanus sativus (Radish).